The chain runs to 343 residues: NADH-ubiquinone oxidoreductase chain 2 (343 aa).

Helical transmembrane passes span Met-1–Thr-21, Tyr-59–Thr-81, Thr-96–Pro-116, Asn-150–Leu-170, Leu-178–Pro-198, Ile-200–Asn-220, Met-241–Met-261, and Leu-270–Leu-290.

It belongs to the complex I subunit 2 family.

Its subcellular location is the mitochondrion inner membrane. The enzyme catalyses a ubiquinone + NADH + 5 H(+)(in) = a ubiquinol + NAD(+) + 4 H(+)(out). Functionally, core subunit of the mitochondrial membrane respiratory chain NADH dehydrogenase (Complex I) that is believed to belong to the minimal assembly required for catalysis. Complex I functions in the transfer of electrons from NADH to the respiratory chain. The immediate electron acceptor for the enzyme is believed to be ubiquinone. The protein is NADH-ubiquinone oxidoreductase chain 2 (MT-ND2) of Lycodon semicarinatus (Ryukyu odd-tooth snake).